A 398-amino-acid chain; its full sequence is Lysophosphatidylserine lipase ABHD12 (398 aa).

Positions Met-1–Thr-16 are enriched in basic and acidic residues. The segment at Met-1 to Gly-24 is disordered. At Met-1–Lys-74 the chain is on the cytoplasmic side. The chain crosses the membrane as a helical span at residues Ile-75–Gly-95. The Extracellular segment spans residues Ile-96–His-398. N-linked (GlcNAc...) asparagine glycosylation is present at Asn-123. Ser-246 serves as the catalytic Nucleophile. Catalysis depends on charge relay system residues Asp-333 and His-372.

The protein belongs to the serine esterase family.

The protein localises to the endoplasmic reticulum membrane. The catalysed reaction is 1-(9Z-octadecenoyl)-sn-glycero-3-phospho-L-serine + H2O = sn-glycero-3-phospho-L-serine + (9Z)-octadecenoate + H(+). It carries out the reaction 1-(9Z-octadecenoyl)-sn-glycero-3-phospho-(1'-sn-glycerol) + H2O = sn-glycero-3-phospho-(1'-sn-glycerol) + (9Z)-octadecenoate + H(+). The enzyme catalyses 1-(9Z-octadecenoyl)-sn-glycero-3-phospho-(1D-myo-inositol) + H2O = sn-glycero-3-phospho-1D-myo-inositol + (9Z)-octadecenoate + H(+). It catalyses the reaction 1-(9Z-octadecenoyl)-sn-glycero-3-phosphoethanolamine + H2O = sn-glycero-3-phosphoethanolamine + (9Z)-octadecenoate + H(+). The catalysed reaction is 1-(9Z-octadecenoyl)-sn-glycero-3-phosphocholine + H2O = 1-(9Z-octadecenoyl)-sn-glycerol + phosphocholine + H(+). It carries out the reaction 2-(9Z-octadecenoyl)-glycerol + H2O = glycerol + (9Z)-octadecenoate + H(+). The enzyme catalyses 1-hexadecanoyl-sn-glycero-3-phospho-L-serine + H2O = sn-glycero-3-phospho-L-serine + hexadecanoate + H(+). It catalyses the reaction 2-(5Z,8Z,11Z,14Z-eicosatetraenoyl)-glycerol + H2O = glycerol + (5Z,8Z,11Z,14Z)-eicosatetraenoate + H(+). The catalysed reaction is Hydrolyzes glycerol monoesters of long-chain fatty acids.. It carries out the reaction 1-decanoylglycerol + H2O = decanoate + glycerol + H(+). The enzyme catalyses 1-dodecanoylglycerol + H2O = dodecanoate + glycerol + H(+). It catalyses the reaction 1-tetradecanoylglycerol + H2O = tetradecanoate + glycerol + H(+). The catalysed reaction is 2-hexadecanoylglycerol + H2O = glycerol + hexadecanoate + H(+). It carries out the reaction 1-(9Z-octadecenoyl)-glycerol + H2O = glycerol + (9Z)-octadecenoate + H(+). The enzyme catalyses 2-(9Z,12Z-octadecadienoyl)-glycerol + H2O = (9Z,12Z)-octadecadienoate + glycerol + H(+). It catalyses the reaction 1-(5Z,8Z,11Z,14Z-eicosatetraenoyl)-glycerol + H2O = glycerol + (5Z,8Z,11Z,14Z)-eicosatetraenoate + H(+). The catalysed reaction is 1-(9Z,12Z-octadecadienoyl)-glycerol + H2O = (9Z,12Z)-octadecadienoate + glycerol + H(+). It carries out the reaction 1-hexadecanoylglycerol + H2O = glycerol + hexadecanoate + H(+). The enzyme catalyses 1-octadecanoylglycerol + H2O = octadecanoate + glycerol + H(+). It catalyses the reaction 1-octadecanoyl-2-(9,10-epoxyoctadecanoyl)-sn-glycero-3-phospho-L-serine + H2O = 9,10-epoxyoctadecanoate + 1-octadecanoyl-sn-glycero-3-phosphoserine + H(+). The catalysed reaction is 1-octadecanoyl-2-(10-hydroxyoctadecanoyl)-sn-glycero-3-phospho-L-serine + H2O = 1-octadecanoyl-sn-glycero-3-phosphoserine + 10-hydroxyoctadecanoate + H(+). It carries out the reaction 1-hexadecanoyl-2-(10-hydroxyoctadecanoyl)-sn-glycero-3-phospho-L-serine + H2O = 10-hydroxyoctadecanoate + 1-hexadecanoyl-sn-glycero-3-phospho-L-serine + H(+). Its function is as follows. Lysophosphatidylserine (LPS) lipase that mediates the hydrolysis of lysophosphatidylserine, a class of signaling lipids that regulates immunological and neurological processes. Represents a major lysophosphatidylserine lipase in the brain, thereby playing a key role in the central nervous system. Also able to hydrolyze oxidized phosphatidylserine; oxidized phosphatidylserine is produced in response to severe inflammatory stress and constitutes a proapoptotic 'eat me' signal. Also has monoacylglycerol (MAG) lipase activity: hydrolyzes 2-arachidonoylglycerol (2-AG), thereby acting as a regulator of endocannabinoid signaling pathways. Has a strong preference for very-long-chain lipid substrates; substrate specificity is likely due to improved catalysis and not improved substrate binding. The polypeptide is Lysophosphatidylserine lipase ABHD12 (Bos taurus (Bovine)).